A 118-amino-acid chain; its full sequence is DNA polymerase epsilon subunit 4 (118 aa).

Composition is skewed to low complexity over residues 1-11 and 19-35; these read MAAAAAAGSGT and GGEA…SAPG. A disordered region spans residues 1–37; that stretch reads MAAAAAAGSGTPREEEAPGGEAAASQAQAPTSAPGGV. At A2 the chain carries N-acetylalanine. T11 is subject to Phosphothreonine. S25 is subject to Phosphoserine.

In terms of assembly, component of the DNA polymerase epsilon complex consisting of four subunits: the catalytic subunit POLE and the accessory subunits POLE2, POLE3 and POLE4. Interaction with POLE3 is a prerequisite for further binding with POLE and POLE2.

The protein resides in the nucleus. In terms of biological role, accessory component of the DNA polymerase epsilon complex. Participates in DNA repair and in chromosomal DNA replication. The protein is DNA polymerase epsilon subunit 4 (Pole4) of Mus musculus (Mouse).